The primary structure comprises 145 residues: Bacilliredoxin SH1401 (145 aa).

Belongs to the bacilliredoxin family.

The sequence is that of Bacilliredoxin SH1401 from Staphylococcus haemolyticus (strain JCSC1435).